The sequence spans 213 residues: Orotate phosphoribosyltransferase (213 aa).

Lys26 provides a ligand contact to 5-phospho-alpha-D-ribose 1-diphosphate. 34–35 (FF) serves as a coordination point for orotate. Residues 72–73 (YK), Arg99, Lys100, Lys103, His105, and 124–132 (DDVITAGTA) each bind 5-phospho-alpha-D-ribose 1-diphosphate. Residues Thr128 and Arg156 each contribute to the orotate site.

This sequence belongs to the purine/pyrimidine phosphoribosyltransferase family. PyrE subfamily. In terms of assembly, homodimer. The cofactor is Mg(2+).

It carries out the reaction orotidine 5'-phosphate + diphosphate = orotate + 5-phospho-alpha-D-ribose 1-diphosphate. It participates in pyrimidine metabolism; UMP biosynthesis via de novo pathway; UMP from orotate: step 1/2. Catalyzes the transfer of a ribosyl phosphate group from 5-phosphoribose 1-diphosphate to orotate, leading to the formation of orotidine monophosphate (OMP). This Haemophilus influenzae (strain 86-028NP) protein is Orotate phosphoribosyltransferase.